The sequence spans 478 residues: Argininosuccinate synthase (478 aa).

ATP contacts are provided by residues 17–25 (AFSGGLDTS) and A43. Y99 contacts L-citrulline. ATP-binding residues include G129 and T131. L-aspartate contacts are provided by T131, N135, and D136. N135 contributes to the L-citrulline binding site. ATP is bound at residue D136. L-citrulline-binding residues include R139 and S192. D194 serves as a coordination point for ATP. Residues T201, E203, and E280 each coordinate L-citrulline.

This sequence belongs to the argininosuccinate synthase family. Type 2 subfamily. In terms of assembly, homotetramer.

The protein localises to the cytoplasm. The enzyme catalyses L-citrulline + L-aspartate + ATP = 2-(N(omega)-L-arginino)succinate + AMP + diphosphate + H(+). Its pathway is amino-acid biosynthesis; L-arginine biosynthesis; L-arginine from L-ornithine and carbamoyl phosphate: step 2/3. The chain is Argininosuccinate synthase from Leifsonia xyli subsp. xyli (strain CTCB07).